The following is a 279-amino-acid chain: Thiazole synthase (279 aa).

The active-site Schiff-base intermediate with DXP is K116. Residues G177, 203–204, and 225–226 each bind 1-deoxy-D-xylulose 5-phosphate; these read AG and NS.

Belongs to the ThiG family. As to quaternary structure, homotetramer. Forms heterodimers with either ThiH or ThiS.

It is found in the cytoplasm. The enzyme catalyses [ThiS sulfur-carrier protein]-C-terminal-Gly-aminoethanethioate + 2-iminoacetate + 1-deoxy-D-xylulose 5-phosphate = [ThiS sulfur-carrier protein]-C-terminal Gly-Gly + 2-[(2R,5Z)-2-carboxy-4-methylthiazol-5(2H)-ylidene]ethyl phosphate + 2 H2O + H(+). Its pathway is cofactor biosynthesis; thiamine diphosphate biosynthesis. Functionally, catalyzes the rearrangement of 1-deoxy-D-xylulose 5-phosphate (DXP) to produce the thiazole phosphate moiety of thiamine. Sulfur is provided by the thiocarboxylate moiety of the carrier protein ThiS. In vitro, sulfur can be provided by H(2)S. The protein is Thiazole synthase of Trichodesmium erythraeum (strain IMS101).